Consider the following 688-residue polypeptide: MANDPRHLPSRKLLVTCALPYANGSIHLGHMLEHIQADIWVRYQRLRGNTVNFICADDAHGTPIMLKAQQMGITPEEMIAAVSEEHQKDFAGFDISFDNYHSTHSEENRELASHIYLELKKNGFISSRTISQLFDPEKEMFLPDRFVKGTCPKCKSEDQYGDNCDNCGETYSPTELINPKSAVSGATPVMKDSEHFFFDLPQFESMLKEWTRSGSLQSETANKMQEWFESGLQQWDISRDAPYFGFEIPGEKDKFFYVWLDAPIGYMGSFKNLCNKRDDLDFDEYWNKDSKTELYHFIGKDIVYFHSLFWPAMLEGSGFRKPNNVFVHGYVTVNGAKMSKSKGTFVKASTYLDHLDPECLRYYYAAKLNSRIDDLDLNLEDFTQRVNADVVNKIVNLASRNAGFIAKRFEGKLSDNFAEPELYNEFVAAADRIAELFEAREFGRAIREITALADKANQYVDEKAPWVVAKEEGKDQELQEICSVGINLFRVLMTYLKPVMPALAARTEAFLNQELTWEGIAQPLTGHEITKFKALFNRIDPKNIEAMIEASKEDAAAEMAAKEKAEAAKTETELSKDPIADEIEFDTFAQVDLRIARIISCEEVPKANKLLKFQLDIGGETRQVFSGIKSAYKPEELEGKLTVMVANLKPRKMKFGMSEGMILAAGPGGSDLWILEPHEGAQPGMRVM.

The short motif at 20 to 30 (PYANGSIHLGH) is the 'HIGH' region element. Zn(2+) is bound by residues Cys-151, Cys-154, Cys-164, and Cys-167. A 'KMSKS' region motif is present at residues 337–341 (KMSKS). Residue Lys-340 coordinates ATP. One can recognise a tRNA-binding domain in the interval 587-688 (TFAQVDLRIA…EGAQPGMRVM (102 aa)).

It belongs to the class-I aminoacyl-tRNA synthetase family. MetG type 1 subfamily. Homodimer. The cofactor is Zn(2+).

It is found in the cytoplasm. It catalyses the reaction tRNA(Met) + L-methionine + ATP = L-methionyl-tRNA(Met) + AMP + diphosphate. Is required not only for elongation of protein synthesis but also for the initiation of all mRNA translation through initiator tRNA(fMet) aminoacylation. In Vibrio parahaemolyticus serotype O3:K6 (strain RIMD 2210633), this protein is Methionine--tRNA ligase.